A 62-amino-acid polypeptide reads, in one-letter code: Alpha-conotoxin-like Ca1.1 (62 aa).

The signal sequence occupies residues 1 to 21; it reads MGMRMMFTVFLLVVLATTVVS. The propeptide occupies 22–46; sequence FTSDRASDGRNAAANAFDLIALIAR. Q47 carries the pyrrolidone carboxylic acid modification. Intrachain disulfides connect C49-C55 and C50-C61.

This sequence belongs to the conotoxin A superfamily. In terms of tissue distribution, expressed by the venom duct.

Its subcellular location is the secreted. Alpha-conotoxins act on postsynaptic membranes, they bind to the nicotinic acetylcholine receptors (nAChR) and thus inhibit them. This Conus caracteristicus (Characteristic cone) protein is Alpha-conotoxin-like Ca1.1.